We begin with the raw amino-acid sequence, 294 residues long: tRNA dimethylallyltransferase (294 aa).

ATP is bound at residue 11 to 18 (GPTAVGKT). Substrate is bound at residue 13–18 (TAVGKT). Residues 36 to 39 (DSQQ) form an interaction with substrate tRNA region.

It belongs to the IPP transferase family. In terms of assembly, monomer. Mg(2+) serves as cofactor.

The enzyme catalyses adenosine(37) in tRNA + dimethylallyl diphosphate = N(6)-dimethylallyladenosine(37) in tRNA + diphosphate. Catalyzes the transfer of a dimethylallyl group onto the adenine at position 37 in tRNAs that read codons beginning with uridine, leading to the formation of N6-(dimethylallyl)adenosine (i(6)A). The chain is tRNA dimethylallyltransferase from Lactococcus lactis subsp. cremoris (strain SK11).